The chain runs to 417 residues: Histidine biosynthesis bifunctional protein his7 (417 aa).

The phosphoribosyl-AMP cyclohydrolase stretch occupies residues 225–299 (GLVYSSKESV…HLDTLHCFGQ (75 aa)). Residues 303–387 (LCQLEKTLID…ISRHLDLKHR (85 aa)) form a phosphoribosyl-ATP pyrophosphohydrolase region.

The protein resides in the cytoplasm. The enzyme catalyses 1-(5-phospho-beta-D-ribosyl)-5'-AMP + H2O = 1-(5-phospho-beta-D-ribosyl)-5-[(5-phospho-beta-D-ribosylamino)methylideneamino]imidazole-4-carboxamide. It carries out the reaction 1-(5-phospho-beta-D-ribosyl)-ATP + H2O = 1-(5-phospho-beta-D-ribosyl)-5'-AMP + diphosphate + H(+). It functions in the pathway amino-acid biosynthesis; L-histidine biosynthesis; L-histidine from 5-phospho-alpha-D-ribose 1-diphosphate: step 2/9. The protein operates within amino-acid biosynthesis; L-histidine biosynthesis; L-histidine from 5-phospho-alpha-D-ribose 1-diphosphate: step 3/9. The sequence is that of Histidine biosynthesis bifunctional protein his7 from Schizosaccharomyces pombe (strain 972 / ATCC 24843) (Fission yeast).